Consider the following 352-residue polypeptide: DNA polymerase IV (352 aa).

Positions 6 to 187 (IIHIDCDCFY…LPVSKLHGVG (182 aa)) constitute a UmuC domain. Residues Asp10 and Asp105 each coordinate Mg(2+). The active site involves Glu106.

The protein belongs to the DNA polymerase type-Y family. As to quaternary structure, monomer. Mg(2+) is required as a cofactor.

The protein localises to the cytoplasm. It carries out the reaction DNA(n) + a 2'-deoxyribonucleoside 5'-triphosphate = DNA(n+1) + diphosphate. In terms of biological role, poorly processive, error-prone DNA polymerase involved in untargeted mutagenesis. Copies undamaged DNA at stalled replication forks, which arise in vivo from mismatched or misaligned primer ends. These misaligned primers can be extended by PolIV. Exhibits no 3'-5' exonuclease (proofreading) activity. May be involved in translesional synthesis, in conjunction with the beta clamp from PolIII. In Ectopseudomonas mendocina (strain ymp) (Pseudomonas mendocina), this protein is DNA polymerase IV.